The following is a 502-amino-acid chain: Neuronal acetylcholine receptor subunit alpha-7 (502 aa).

An N-terminal signal peptide occupies residues 1–22 (MCGGRGGIWLALAAALLHVSLQ). At 23-233 (GEFQRRLYKE…VTMRRRTLYY (211 aa)) the chain is on the extracellular side. Arg-42 and Val-44 together coordinate Ca(2+). Asn-46, Asn-90, and Asn-133 each carry an N-linked (GlcNAc...) asparagine glycan. Residues Cys-150 and Cys-164 are joined by a disulfide bond. Ca(2+)-binding residues include Ser-172 and Tyr-210. A disulfide bond links Cys-212 and Cys-213. The next 3 helical transmembrane spans lie at 234-254 (GLNL…VFLL), 262-282 (ISLG…VAEI), and 295-315 (QYFA…VIVL). The segment at 260 to 267 (EKISLGIT) is essential for TMEM35A/NACHO-mediated proper subunit assembly and trafficking to cell membrane. Residues 316–469 (RYHHHDPDGG…WKFAACVVDR (154 aa)) are Cytoplasmic-facing. Residues 470 to 490 (LCLMAFSVFTIICTIGILMSA) traverse the membrane as a helical segment.

This sequence belongs to the ligand-gated ion channel (TC 1.A.9) family. Acetylcholine receptor (TC 1.A.9.1) subfamily. Alpha-7/CHRNA7 sub-subfamily. Homopentamer. Can also form heteropentamers with CHRNB2, mainly found in basal forebrain cholinergic neurons. Interacts with RIC3; which is required for proper folding and assembly. Interacts with LYPD6. Interacts with CANX. Post-translationally, glycosylations at Asn-46, Asn-90 and Asn-133 are essential for TMEM35A/NACHO-mediated proper subunit assembly and trafficking to the cell membrane. Expressed in neurons. Expressed in umbrella cells of urothelium (at protein level).

It is found in the postsynaptic cell membrane. The protein localises to the cell membrane. It carries out the reaction Ca(2+)(in) = Ca(2+)(out). The enzyme catalyses K(+)(in) = K(+)(out). It catalyses the reaction Na(+)(in) = Na(+)(out). The catalysed reaction is choline(out) = choline(in). It carries out the reaction NH4(+)(in) = NH4(+)(out). The enzyme catalyses L-arginine(in) = L-arginine(out). It catalyses the reaction guanidine(out) = guanidine(in). With respect to regulation, activated by a myriad of ligands such as acetylcholine, cytisine, nicotine, choline and epibatidine. Oligomeric amyloid-beta protein 42 activates specifially CHRNA7:CHRNB2 nAchRs. Activity is modulated by positive allosteric modulators (PAMs), such as flavonoids, with a wide range of chemical diversity, pharmacological sensitivity and efficacy. AChR activity is inhibited by the antagonists alpha-conotoxons RgIA, ImI and ImII, small disulfide-constrained peptides from cone snails. Alpha-conotoxin PnIC selectively inhibits CHRNA7:CHRNB2 over CHRNA7 homopentamer. Functionally, component of neuronal acetylcholine receptors (nAChRs) that function as pentameric, ligand-gated cation channels with high calcium permeability among other activities. nAChRs are excitatory neurotrasnmitter receptors formed by a collection of nAChR subunits known to mediate synaptic transmission in the nervous system and the neuromuscular junction. Each nAchR subunit confers differential attributes to channel properties, including activation, deactivation and desensitization kinetics, pH sensitivity, cation permeability, and binding to allosteric modulators. CHRNA7 forms homopentameric neuronal acetylcholine receptors abundantly expressed in the central nervous system, characterized by fast desensitization and high calcium permeability. Also forms heteropentamers with CHRNB2, mainly expressed in basal forebrain cholinergic neurons. Involved in the modulation of calcium-dependent signaling pathways and influences the release of neurotransmitters, including dopamine, glutamate and GABA. Also expressed in non-neuronal cells such as immune cells like lymphocytes, monocytes and macrophages. In T cells, activation induces metabotropic signaling that results in an increase of intracellular Ca2+ concentrations, independent of ionotropic receptor functions. In macrophages, required for acetylcholine-mediated inhibition of TNF and other inflammatory cytokine release. Once activated by acetylcholine, nicotine or other agonists, selectively inhibits production of pro-inflammatory cytokines while leaving anti-inflammatory cytokines undisturbed. Stimulates the cholinergic anti-inflammatory pathway, controlling inflammation by inhibiting NFKB nuclear translocation and activating the JAK2-STAT3 pathway, independently of ion channel activity. Also expressed in the urothelium where it modulates reflex bladder activity by increasing intracellular calcium through internal stores and decreasing basal ATP release. In Rattus norvegicus (Rat), this protein is Neuronal acetylcholine receptor subunit alpha-7 (Chrna7).